A 232-amino-acid polypeptide reads, in one-letter code: Orotidine 5'-phosphate decarboxylase (232 aa).

Residues D13, K35, 62–71 (DLKFHDIPNT), T122, R182, Q191, G211, and R212 contribute to the substrate site. K64 acts as the Proton donor in catalysis.

Belongs to the OMP decarboxylase family. Type 1 subfamily. In terms of assembly, homodimer.

The enzyme catalyses orotidine 5'-phosphate + H(+) = UMP + CO2. It functions in the pathway pyrimidine metabolism; UMP biosynthesis via de novo pathway; UMP from orotate: step 2/2. Functionally, catalyzes the decarboxylation of orotidine 5'-monophosphate (OMP) to uridine 5'-monophosphate (UMP). This is Orotidine 5'-phosphate decarboxylase from Pseudomonas fluorescens (strain Pf0-1).